The primary structure comprises 507 residues: MTLWLPTTGKVYLPPTPPVARVQSTDEYVERTNIFYHAMSDRLLTVGHPFYDVRSTDGLRIEVPKVSGNQYRAFRVTLPDPNKFALADMSVYNPEKERLVWACAGLEIGRGQPLGVGTTGHPLFNKLRDTENNSSYQGGSTDDRQNTSFDPKQVQMFVVGCVPCIGEHWDRAPVCENEQNNQTGLCPPLELKNTVIEDGDMVDIGFGNINNKVLSFNKSDVSLDIVNETCKYPDFLSMANDVYGDACFFFARREQCYARHYFVRGGNVGDAVPDGSVNQDHKFYLPAQTGQQQRTLGNSTYFPTVSGSLVTSDAQLFNRPFWLRRAQGHNNGILWGNQIFVTVADNTRNTNFSISVSTEAGAVTEYNSQNIREYLRHVEEYQLSFILQLCKIPLKAEVLTQINAMNSGILEDWQLGFVPTPDNPVHDIYRYINSKATKCPDAVVEKEKEDPFAKYTFWNVNLTEKLSLDLDQYPLGRKFIFQSGLQARPRTIRTSVKVPKGIKRKRS.

The segment at 120-147 is disordered; sequence GHPLFNKLRDTENNSSYQGGSTDDRQNT. Residues 132–147 are compositionally biased toward polar residues; that stretch reads NNSSYQGGSTDDRQNT.

This sequence belongs to the papillomaviridae L1 protein family. As to quaternary structure, self-assembles into homopentamers. The capsid has an icosahedral symmetry and consists of 72 capsomers, with each capsomer being a pentamer of L1. Interacts with the minor capsid protein L2; this interaction is necessary for viral genome encapsidation. Interacts with protein E2; this interaction enhances E2-dependent replication and transcription activation.

Its subcellular location is the virion. It is found in the host nucleus. Forms an icosahedral capsid with a T=7 symmetry and a 50 nm diameter. The capsid is composed of 72 pentamers linked to each other by disulfide bonds and associated with L2 proteins. Binds to heparan sulfate proteoglycans on cell surface of basal layer keratinocytes to provide initial virion attachment. This binding mediates a conformational change in the virus capsid that facilitates efficient infection. The virion enters the host cell via endocytosis. During virus trafficking, L1 protein dissociates from the viral DNA and the genomic DNA is released to the host nucleus. The virion assembly takes place within the cell nucleus. Encapsulates the genomic DNA together with protein L2. This chain is Major capsid protein L1, found in Homo sapiens (Human).